Consider the following 163-residue polypeptide: Anthranilate 1,2-dioxygenase small subunit (163 aa).

Belongs to the bacterial ring-hydroxylating dioxygenase beta subunit family. In terms of assembly, the anthranilate dioxygenase (AntDO) multicomponent enzyme system is composed of an oxygenase component and a NADH:acceptor reductase component (AntC). The oxygenase component is a heterohexamer of 3 large (AntA) and 3 small (AntB) subunits.

The catalysed reaction is anthranilate + NADH + O2 + 3 H(+) = catechol + NH4(+) + CO2 + NAD(+). It catalyses the reaction anthranilate + NADPH + O2 + 3 H(+) = catechol + NH4(+) + CO2 + NADP(+). Its pathway is aromatic compound metabolism; anthranilate degradation via hydroxylation; catechol from anthranilate: step 1/1. Its function is as follows. Component of anthranilate dioxygenase multicomponent enzyme system which catalyzes the incorporation of both atoms of molecular oxygen into anthranilate to form catechol. This Acinetobacter baylyi (strain ATCC 33305 / BD413 / ADP1) protein is Anthranilate 1,2-dioxygenase small subunit.